The sequence spans 84 residues: Toxin Cex12 (84 aa).

A signal peptide spans 1 to 19; sequence MNSLLMITTCLILVGTVWA. An LCN-type CS-alpha/beta domain is found at 20 to 83; that stretch reads NDGYLFDKRK…ISRTPGKTCR (64 aa). Cystine bridges form between Cys31–Cys82, Cys35–Cys58, Cys44–Cys63, and Cys48–Cys65.

It belongs to the long (4 C-C) scorpion toxin superfamily. Sodium channel inhibitor family. Beta subfamily. As to expression, expressed by the venom gland.

It localises to the secreted. In terms of biological role, beta toxins bind voltage-independently at site-4 of sodium channels (Nav) and shift the voltage of activation toward more negative potentials thereby affecting sodium channel activation and promoting spontaneous and repetitive firing. This Centruroides exilicauda (Bark scorpion) protein is Toxin Cex12.